The chain runs to 204 residues: Guanylate kinase (204 aa).

The 180-residue stretch at 5–184 (GLLIVLSGPS…ACDKIKAIVL (180 aa)) folds into the Guanylate kinase-like domain. Position 12–19 (12–19 (GPSGVGKG)) interacts with ATP.

The protein belongs to the guanylate kinase family.

The protein resides in the cytoplasm. The catalysed reaction is GMP + ATP = GDP + ADP. In terms of biological role, essential for recycling GMP and indirectly, cGMP. This is Guanylate kinase (gmk) from Bacillus subtilis (strain 168).